A 65-amino-acid polypeptide reads, in one-letter code: MFKLKTKSGAKKRFKFIVNGKIKRKKSFKNHLLTKKENKRKRRLSYFSRVHKSDIKNIKKQLLLN.

This sequence belongs to the bacterial ribosomal protein bL35 family.

This is Large ribosomal subunit protein bL35 from Karelsulcia muelleri (strain GWSS) (Sulcia muelleri).